We begin with the raw amino-acid sequence, 88 residues long: MEYQYPMNEDWTTEEAVDVIAFFQQVENAYEKGADRDRLLNAYRRFKEIVPGKAEEKKICSQFEADSTYSPYRTVKQAKQSDQAIIKM.

The protein belongs to the UPF0223 family.

This is UPF0223 protein RBAM_014500 from Bacillus velezensis (strain DSM 23117 / BGSC 10A6 / LMG 26770 / FZB42) (Bacillus amyloliquefaciens subsp. plantarum).